Reading from the N-terminus, the 568-residue chain is Phosphoprotein (568 aa).

2 disordered regions span residues M1–R22 and P40–E320. Basic and acidic residues predominate over residues I7–G20. The interval D33–T41 is N0 binding. Residues L50 to P60 show a composition bias toward polar residues. Position 68 is a phosphoserine; by host (S68). Positions R83 to A101 are enriched in basic and acidic residues. A Phosphoserine; by host modification is found at S125. Residues G150–D168 show a composition bias toward basic and acidic residues. The segment covering A191–A206 has biased composition (polar residues). A phosphoserine; by host mark is found at S192, S249, and S257. The tract at residues F344 to S411 is multimerization. Residues Y364–H429 are a coiled coil. Residues E412–T445 are l protein binding. A phosphoserine; by host mark is found at S447 and S449. Residues D479 to N568 are interaction with the nucleocapsid (N-RNA).

The protein belongs to the respirovirus P protein family. Homotetramer. Interacts (via multimerization domain) with polymerase L; this interaction forms the polymerase complex. Interacts (via N-terminus) with N0; this interaction allows P to chaperon N0 before encapsidation and form the N-P complex. Interacts (via C-terminus) with N-RNA template; this interaction positions the polymerase on the template. Post-translationally, phosphorylated by PKC/PRKCZ, and other unknown kinases. Phosphorylation is necessary for viral transcription and replication. The N-terminus contains the majority of phosphorylated sites. Ser-249 is the major site of phosphorylation, but is not necessary for most functions.

Its subcellular location is the host cytoplasm. In terms of biological role, essential cofactor of the RNA polymerase L that plays a central role in the transcription and replication by forming the polymerase complex with RNA polymerase L and recruiting L to the genomic N-RNA template for RNA synthesis. Also plays a central role in the encapsidation of nascent RNA chains by forming the encapsidation complex with the nucleocapsid protein N (N-P complex). Acts as a chaperone for newly synthesized free N protein, so-called N0, allowing encapsidation of nascent RNA chains during replication. The nucleoprotein protein N prevents excessive phosphorylation of P, which leads to down-regulation of viral transcription/ replication. Participates, together with N, in the formation of viral factories (viroplasms), which are large inclusions in the host cytoplasm where replication takes place. Recruits host PI4KB and remodel the host endoplasmic reticulum membrane to form viral replication factories. This Sendai virus (strain 6/94) (SeV) protein is Phosphoprotein (P/V/C).